The following is a 336-amino-acid chain: Ornithine carbamoyltransferase, catabolic (336 aa).

Carbamoyl phosphate-binding positions include 57-60 (STRT), Gln-84, Arg-108, and 135-138 (HPTQ). L-ornithine-binding positions include Asn-168, Asp-232, and 236–237 (SM). Residues 274-275 (CL) and Arg-321 each bind carbamoyl phosphate.

Belongs to the aspartate/ornithine carbamoyltransferase superfamily. OTCase family.

Its subcellular location is the cytoplasm. The enzyme catalyses carbamoyl phosphate + L-ornithine = L-citrulline + phosphate + H(+). It participates in amino-acid degradation; L-arginine degradation via ADI pathway; carbamoyl phosphate from L-arginine: step 2/2. In terms of biological role, reversibly catalyzes the transfer of the carbamoyl group from carbamoyl phosphate (CP) to the N(epsilon) atom of ornithine (ORN) to produce L-citrulline. This chain is Ornithine carbamoyltransferase, catabolic, found in Burkholderia pseudomallei (strain K96243).